Reading from the N-terminus, the 166-residue chain is PR-toxin biosynthesis cluster protein 10 (166 aa).

In terms of biological role, part of the gene cluster that mediates the biosynthesis of PR-toxin, a bicyclic sesquiterpene belonging to the eremophilane class and acting as a mycotoxin. The first step of the pathway is catalyzed by the aristolochene synthase which performs the cyclization of trans,trans-farnesyl diphosphate (FPP) to the bicyclic sesquiterpene aristolochene. Following the formation of aristolochene, the non-oxygenated aristolochene is converted to the trioxygenated intermediate eremofortin B, via 7-epi-neopetasone. This conversion appears to involve three enzymes, a hydroxysterol oxidase-like enzyme, the quinone-oxidase prx3 that forms the quinone-type-structure in the bicyclic nucleus of aristolochene with the C8-oxo group and the C-3 hydroxyl group, and the P450 monooxygenase prx9 that introduces the epoxide at the double bond between carbons 1 and 2. No monoxy or dioxy-intermediates have been reported to be released to the broth, so these three early oxidative reactions may be coupled together. Eremofortin B is further oxidized by another P450 monooxygenase, that introduces a second epoxide between carbons 7 and 11 prior to acetylation to eremofortin A by the acetyltransferase prx11. The second epoxidation may be performed by a second P450 monooxygenase. After the acetylation step, eremofortin A is converted to eremofortin C and then to PR-toxin. First the conversion of eremofortin A to eremofortin C proceeds by oxidation of the side chain of the molecule at C-12 and is catalyzed by the short-chain oxidoreductase prx1. The cytochrome P450 monooxygenase prx8 also plays a role in this step. The primary alcohol formed at C-12 is finally oxidized by the short-chain alcohol dehydrogenase prx4 that forms PR-toxin. The protein is PR-toxin biosynthesis cluster protein 10 of Penicillium rubens (strain ATCC 28089 / DSM 1075 / NRRL 1951 / Wisconsin 54-1255) (Penicillium chrysogenum).